A 263-amino-acid chain; its full sequence is 5'-nucleotidase SurE (263 aa).

A divalent metal cation is bound by residues Asp15, Asp16, Ser46, and Asn102.

Belongs to the SurE nucleotidase family. It depends on a divalent metal cation as a cofactor.

It is found in the cytoplasm. It carries out the reaction a ribonucleoside 5'-phosphate + H2O = a ribonucleoside + phosphate. Its function is as follows. Nucleotidase that shows phosphatase activity on nucleoside 5'-monophosphates. This chain is 5'-nucleotidase SurE, found in Chlorobaculum tepidum (strain ATCC 49652 / DSM 12025 / NBRC 103806 / TLS) (Chlorobium tepidum).